We begin with the raw amino-acid sequence, 396 residues long: Elongation factor Tu (396 aa).

One can recognise a tr-type G domain in the interval 10 to 206 (KPHVNVGTIG…TLDEYIPEPE (197 aa)). The G1 stretch occupies residues 19 to 26 (GHVDHGKT). Residue 19–26 (GHVDHGKT) coordinates GTP. Threonine 26 provides a ligand contact to Mg(2+). The interval 60-64 (GITIA) is G2. The interval 81-84 (DCPG) is G3. GTP is bound by residues 81–85 (DCPGH) and 136–139 (NKAD). Residues 136–139 (NKAD) form a G4 region. The tract at residues 174-176 (SAL) is G5.

The protein belongs to the TRAFAC class translation factor GTPase superfamily. Classic translation factor GTPase family. EF-Tu/EF-1A subfamily. As to quaternary structure, monomer.

It localises to the cytoplasm. The catalysed reaction is GTP + H2O = GDP + phosphate + H(+). In terms of biological role, GTP hydrolase that promotes the GTP-dependent binding of aminoacyl-tRNA to the A-site of ribosomes during protein biosynthesis. The polypeptide is Elongation factor Tu (Alcanivorax borkumensis (strain ATCC 700651 / DSM 11573 / NCIMB 13689 / SK2)).